Consider the following 366-residue polypeptide: uncharacterized protein (366 aa).

This is an uncharacterized protein from Methanocaldococcus jannaschii (strain ATCC 43067 / DSM 2661 / JAL-1 / JCM 10045 / NBRC 100440) (Methanococcus jannaschii).